The chain runs to 209 residues: Potassium-transporting ATPase KdpC subunit (209 aa).

The chain crosses the membrane as a helical span at residues 11–31; sequence MILALTVLTGLAYPLAVTAVA. The segment at 188–209 is disordered; sequence AQAPTPRQPEPGHPEPGRPEVR. Residues 197 to 209 are compositionally biased toward basic and acidic residues; sequence EPGHPEPGRPEVR.

It belongs to the KdpC family. The system is composed of three essential subunits: KdpA, KdpB and KdpC.

It localises to the cell inner membrane. Its function is as follows. Part of the high-affinity ATP-driven potassium transport (or Kdp) system, which catalyzes the hydrolysis of ATP coupled with the electrogenic transport of potassium into the cytoplasm. This subunit acts as a catalytic chaperone that increases the ATP-binding affinity of the ATP-hydrolyzing subunit KdpB by the formation of a transient KdpB/KdpC/ATP ternary complex. The protein is Potassium-transporting ATPase KdpC subunit of Rhodospirillum centenum (strain ATCC 51521 / SW).